A 198-amino-acid polypeptide reads, in one-letter code: uncharacterized protein (198 aa).

Residues 1–110 (MTGYFLPPQT…GTTVSDDFEG (110 aa)) enclose the PA14 domain.

The protein belongs to the flocculin family.

This is an uncharacterized protein from Saccharomyces cerevisiae (strain ATCC 204508 / S288c) (Baker's yeast).